The chain runs to 231 residues: Large ribosomal subunit protein uL1 (231 aa).

It belongs to the universal ribosomal protein uL1 family. As to quaternary structure, part of the 50S ribosomal subunit.

Its function is as follows. Binds directly to 23S rRNA. The L1 stalk is quite mobile in the ribosome, and is involved in E site tRNA release. In terms of biological role, protein L1 is also a translational repressor protein, it controls the translation of the L11 operon by binding to its mRNA. This is Large ribosomal subunit protein uL1 from Nitrosococcus oceani (strain ATCC 19707 / BCRC 17464 / JCM 30415 / NCIMB 11848 / C-107).